The chain runs to 232 residues: 2,3,4,5-tetrahydropyridine-2,6-dicarboxylate N-acetyltransferase (232 aa).

Belongs to the transferase hexapeptide repeat family. DapH subfamily.

It catalyses the reaction (S)-2,3,4,5-tetrahydrodipicolinate + acetyl-CoA + H2O = L-2-acetamido-6-oxoheptanedioate + CoA. The protein operates within amino-acid biosynthesis; L-lysine biosynthesis via DAP pathway; LL-2,6-diaminopimelate from (S)-tetrahydrodipicolinate (acetylase route): step 1/3. In terms of biological role, catalyzes the transfer of an acetyl group from acetyl-CoA to tetrahydrodipicolinate. This Streptococcus pneumoniae (strain CGSP14) protein is 2,3,4,5-tetrahydropyridine-2,6-dicarboxylate N-acetyltransferase.